The primary structure comprises 471 residues: tRNA(Ile)-lysidine synthase (471 aa).

Serine 27–serine 32 is a binding site for ATP.

It belongs to the tRNA(Ile)-lysidine synthase family.

The protein resides in the cytoplasm. The enzyme catalyses cytidine(34) in tRNA(Ile2) + L-lysine + ATP = lysidine(34) in tRNA(Ile2) + AMP + diphosphate + H(+). Functionally, ligates lysine onto the cytidine present at position 34 of the AUA codon-specific tRNA(Ile) that contains the anticodon CAU, in an ATP-dependent manner. Cytidine is converted to lysidine, thus changing the amino acid specificity of the tRNA from methionine to isoleucine. The chain is tRNA(Ile)-lysidine synthase from Dehalococcoides mccartyi (strain CBDB1).